Here is a 441-residue protein sequence, read N- to C-terminus: Carbohydrate sulfotransferase 3 (441 aa).

Residues Met-1 to Arg-4 lie on the Cytoplasmic side of the membrane. The helical; Signal-anchor for type II membrane protein transmembrane segment at Ser-5–Glu-21 threads the bilayer. Residues Lys-22 to Thr-441 are Lumenal-facing. N-linked (GlcNAc...) asparagine glycans are attached at residues Asn-47 and Asn-58. Thr-106–Phe-112 is a 3'-phosphoadenylyl sulfate binding site. N-linked (GlcNAc...) asparagine glycosylation occurs at Asn-221. Arg-266–Ser-274 is a binding site for 3'-phosphoadenylyl sulfate. N-linked (GlcNAc...) asparagine glycosylation occurs at Asn-427.

This sequence belongs to the sulfotransferase 1 family. Gal/GlcNAc/GalNAc subfamily. Post-translationally, N-glycosylated. In electric organ, it is moderately expressed in spinal cord and electric lobe and undetectable in non-neural tissues. Expressed in a punctate distribution in the innervated portion of electrocytes. In the CNS, it is localized within the somas of motor neurons and neurons of the electromotor nucleus.

The protein resides in the golgi apparatus membrane. The enzyme catalyses chondroitin beta-D-glucuronate + n 3'-phosphoadenylyl sulfate = chondroitin 6'-sulfate + n adenosine 3',5'-bisphosphate + n H(+). It catalyses the reaction 3'-phosphoadenylyl sulfate + keratan = adenosine 3',5'-bisphosphate + keratan 6'-sulfate.. Sulfotransferase that utilizes 3'-phospho-5'-adenylyl sulfate (PAPS) as sulfonate donor to catalyze the transfer of sulfate to position 6 of the N-acetylgalactosamine (GalNAc) residue of chondroitin. Chondroitin sulfate constitutes the predominant proteoglycan present in cartilage and is distributed on the surfaces of many cells and extracellular matrices. Catalyzes with a lower efficiency the sulfation of Gal residues of keratan sulfate, another glycosaminoglycan. Can also catalyze the sulfation of the Gal residues in sialyl N-acetyllactosamine (sialyl LacNAc) oligosaccharides. This is Carbohydrate sulfotransferase 3 (CHST3) from Tetronarce californica (Pacific electric ray).